A 259-amino-acid polypeptide reads, in one-letter code: Complement factor D (259 aa).

Positions 1 to 21 (MADRSLHLVVLILLGTALCAA) are cleaved as a signal peptide. Residues 22-26 (QPRGR) constitute a propeptide, activation peptide. The Peptidase S1 domain maps to 27–254 (ILRGQEAPSH…YVAWIDGVMA (228 aa)). Residues Cys-52 and Cys-68 are joined by a disulfide bond. Active-site charge relay system residues include His-67 and Asp-115. Cystine bridges form between Cys-149–Cys-215, Cys-180–Cys-196, and Cys-205–Cys-230. Ser-209 serves as the catalytic Charge relay system. The tract at residues 224–228 (TSGSR) is self-inhibitor loop.

The protein belongs to the peptidase S1 family. In terms of processing, CFD is activated by the removal of 5 residues at the N-terminus, named activation peptide, by the MASP-3 isoform of MASP1.

Its subcellular location is the secreted. It carries out the reaction Selective cleavage of Arg-|-Lys bond in complement factor B when in complex with complement subcomponent C3b or with cobra venom factor.. Its activity is regulated as follows. Circulates in plasma in a mature but self-inhibited form. Activated by factor B (CFB), which displaces the self-inhibition loop. Associates with CFB complexed with complement C3b. Serine protease that initiates the alternative pathway of the complement system, a cascade of proteins that leads to phagocytosis and breakdown of pathogens and signaling that strengthens the adaptive immune system. In contrast to other complement pathways (classical, lectin and GZMK) that are directly activated by pathogens or antigen-antibody complexes, the alternative complement pathway is initiated by the spontaneous hydrolysis of complement C3. The alternative complement pathway acts as an amplification loop that enhances complement activation by mediating the formation of C3 and C5 convertases. Activated CFD cleaves factor B (CFB) when the latter is complexed with complement C3b, activating the C3 convertase of the alternative pathway. The sequence is that of Complement factor D (CFD) from Bos taurus (Bovine).